We begin with the raw amino-acid sequence, 294 residues long: Non-selective voltage-gated ion channel VDAC2 (294 aa).

N-acetylalanine is present on Ala2. Positions 23 and 31 each coordinate ATP. Lys31 carries the post-translational modification N6-acetyllysine; alternate. Lys31 carries the N6-succinyllysine; alternate modification. A Glycyl lysine isopeptide (Lys-Gly) (interchain with G-Cter in ubiquitin); alternate cross-link involves residue Lys31. 2 beta stranded membrane-spanning segments follow: residues 37–46 (LVKLDVKTKS) and 50–58 (VEFSTSGSS). Lys64 is covalently cross-linked (Glycyl lysine isopeptide (Lys-Gly) (interchain with G-Cter in ubiquitin)). The beta stranded transmembrane segment at 65 to 75 (VTGTLETKYKW) threads the bilayer. Residue Tyr78 is modified to Phosphotyrosine. The next 3 beta stranded transmembrane spans lie at 80–87 (LTFTEKWN), 91–100 (TLGTEIAIED), and 106–115 (LKLTFDTTFS). Thr118 is modified (phosphothreonine). At Lys120 the chain carries N6-acetyllysine; alternate. A Glycyl lysine isopeptide (Lys-Gly) (interchain with G-Cter in ubiquitin); alternate cross-link involves residue Lys120. A Glycyl lysine isopeptide (Lys-Gly) (interchain with G-Cter in ubiquitin) cross-link involves residue Lys121. The next 4 beta stranded transmembrane spans lie at 122–131 (SGKIKSSYKR), 134–141 (INLGCDVD), 148–156 (AIHGSAVFG), and 161–169 (LAGYQMTFD). Lys172 participates in a covalent cross-link: Glycyl lysine isopeptide (Lys-Gly) (interchain with G-Cter in ubiquitin). The next 6 beta stranded transmembrane spans lie at 174-186 (KLTR…GYRT), 189-196 (FQLHTNVN), 200-209 (EFGGSIYQKV), 213-222 (LDTSVNLAWT), 229-238 (RFGIAAKYQL), and 242-249 (ASISAKVN). Position 251 is a phosphoserine (Ser251). NAD(+) contacts are provided by residues 253–255 (LIG) and 271–275 (SALVD). Beta stranded transmembrane passes span 253–262 (LIGVGYTQTL) and 265–274 (GVKLTLSALV). N6-acetyllysine; alternate is present on Lys277. Residue Lys277 forms a Glycyl lysine isopeptide (Lys-Gly) (interchain with G-Cter in ubiquitin); alternate linkage. The chain crosses the membrane as a beta stranded span at residues 284 to 293 (HKLGLALELE).

The protein belongs to the eukaryotic mitochondrial porin family. As to quaternary structure, monomer, homodimer and higher order oligomers; formation of higher order structures is necessary for scramblase activity. Interacts with ARMC12 in a TBC1D21-dependent manner. Interacts with KLC3. Interacts with SPATA33. Interacts with PPP3CC in a SPATA33-dependent manner. Ubiquitinated by PRKN during mitophagy, leading to its degradation and enhancement of mitophagy. Deubiquitinated by USP30.

Its subcellular location is the mitochondrion outer membrane. The protein localises to the membrane. It carries out the reaction chloride(in) = chloride(out). The enzyme catalyses K(+)(in) = K(+)(out). It catalyses the reaction a 1,2-diacyl-sn-glycero-3-phospho-L-serine(in) = a 1,2-diacyl-sn-glycero-3-phospho-L-serine(out). The catalysed reaction is a 1,2-diacyl-sn-glycero-3-phosphocholine(in) = a 1,2-diacyl-sn-glycero-3-phosphocholine(out). It carries out the reaction a 1,2-diacyl-sn-glycero-3-phospho-(1D-myo-inositol)(in) = a 1,2-diacyl-sn-glycero-3-phospho-(1D-myo-inositol)(out). Its function is as follows. Non-selective voltage-gated ion channel that mediates the transport of anions and cations through the mitochondrion outer membrane and plasma membrane. The channel adopts an open conformation at zero mV and a closed conformation at both positive and negative potentials. There are two populations of channels; the main that functions in a lower open-state conductance with lower ion selectivity, that switch, in a voltage-dependent manner, from the open to a low-conducting 'closed' state and the other that has a normal ion selectivity in the typical high conductance, 'open' state. Binds various lipids, including the sphingolipid ceramide, the phospholipid phosphatidylcholine, and the sterols cholesterol and oxysterol. Binding of ceramide promotes the mitochondrial outer membrane permeabilization (MOMP) apoptotic pathway. Catalyzes the scrambling of phospholipids across the outer mitochondrial membrane; the mechanism is unrelated to channel activity and is capable of translocating both anionic and zwitterionic phospholipids. This Bos taurus (Bovine) protein is Non-selective voltage-gated ion channel VDAC2.